Consider the following 489-residue polypeptide: Rhamnulokinase (489 aa).

Residue 13 to 17 (ASSGR) coordinates ATP. A disulfide bridge connects residues cysteine 68 and cysteine 222. Substrate contacts are provided by residues glycine 83 and 236–238 (HDT). Aspartate 237 serves as the catalytic Proton acceptor. ATP is bound at residue threonine 259. Asparagine 296 serves as a coordination point for substrate. ATP is bound at residue glutamine 304. Cysteines 353 and 370 form a disulfide. Position 402 (glycine 402) interacts with ATP. A disulfide bridge connects residues cysteine 413 and cysteine 417.

It belongs to the rhamnulokinase family. The cofactor is Mg(2+).

The enzyme catalyses L-rhamnulose + ATP = L-rhamnulose 1-phosphate + ADP + H(+). The protein operates within carbohydrate degradation; L-rhamnose degradation; glycerone phosphate from L-rhamnose: step 2/3. Functionally, involved in the catabolism of L-rhamnose (6-deoxy-L-mannose). Catalyzes the transfer of the gamma-phosphate group from ATP to the 1-hydroxyl group of L-rhamnulose to yield L-rhamnulose 1-phosphate. This chain is Rhamnulokinase, found in Shigella sonnei (strain Ss046).